The following is a 122-amino-acid chain: Large ribosomal subunit protein uL14 (122 aa).

Belongs to the universal ribosomal protein uL14 family. In terms of assembly, part of the 50S ribosomal subunit. Forms a cluster with proteins L3 and L19. In the 70S ribosome, L14 and L19 interact and together make contacts with the 16S rRNA in bridges B5 and B8.

Functionally, binds to 23S rRNA. Forms part of two intersubunit bridges in the 70S ribosome. The protein is Large ribosomal subunit protein uL14 of Hyphomonas neptunium (strain ATCC 15444).